Consider the following 235-residue polypeptide: tRNA (guanine-N(1)-)-methyltransferase (235 aa).

S-adenosyl-L-methionine is bound by residues G112 and 132–137; that span reads IGDYVI.

This sequence belongs to the RNA methyltransferase TrmD family. Homodimer.

The protein localises to the cytoplasm. The enzyme catalyses guanosine(37) in tRNA + S-adenosyl-L-methionine = N(1)-methylguanosine(37) in tRNA + S-adenosyl-L-homocysteine + H(+). Its function is as follows. Specifically methylates guanosine-37 in various tRNAs. This is tRNA (guanine-N(1)-)-methyltransferase from Anaplasma marginale (strain St. Maries).